The sequence spans 323 residues: NADH-ubiquinone oxidoreductase chain 1 (323 aa).

8 helical membrane passes run 9-29 (ILNP…LTLI), 76-96 (LFVL…PMPM), 107-127 (ILFV…SGWA), 145-165 (ISYE…SGGF), 175-195 (EATW…ISTL), 227-247 (LFFL…AVLF), 258-278 (EFTS…FLWV), and 298-318 (FLPL…ACAG).

The protein belongs to the complex I subunit 1 family.

The protein resides in the mitochondrion inner membrane. It carries out the reaction a ubiquinone + NADH + 5 H(+)(in) = a ubiquinol + NAD(+) + 4 H(+)(out). Functionally, core subunit of the mitochondrial membrane respiratory chain NADH dehydrogenase (Complex I) that is believed to belong to the minimal assembly required for catalysis. Complex I functions in the transfer of electrons from NADH to the respiratory chain. The immediate electron acceptor for the enzyme is believed to be ubiquinone. This Gadus morhua (Atlantic cod) protein is NADH-ubiquinone oxidoreductase chain 1 (MT-ND1).